We begin with the raw amino-acid sequence, 103 residues long: Protein E7 (103 aa).

The segment at 1–47 (MIGKEVTIPDIILQEEFGQPIDLQCYENLTAEAPAEQELEAEEELIQ) is E7 terminal domain. Positions 23 to 27 (LQCYE) match the LXCXE motif; interaction with host RB1 and TMEM173/STING motif. A zinc finger lies at 57–94 (CGGGCGARLRVFVLATDAAIRSFQELLLEELQFLCPQC). Positions 76-84 (IRSFQELLL) match the Nuclear export signal motif.

The protein belongs to the papillomaviridae E7 protein family. In terms of assembly, homodimer. Homooligomer. Interacts with host RB1; this interaction induces dissociation of RB1-E2F1 complex thereby disrupting RB1 activity. Interacts with host EP300; this interaction represses EP300 transcriptional activity. Interacts with protein E2; this interaction inhibits E7 oncogenic activity. Interacts with host TMEM173/STING; this interaction impairs the ability of TMEM173/STING to sense cytosolic DNA and promote the production of type I interferon (IFN-alpha and IFN-beta). Highly phosphorylated.

It localises to the host cytoplasm. The protein localises to the host nucleus. Functionally, plays a role in viral genome replication by driving entry of quiescent cells into the cell cycle. Stimulation of progression from G1 to S phase allows the virus to efficiently use the cellular DNA replicating machinery to achieve viral genome replication. E7 protein has both transforming and trans-activating activities. Induces the disassembly of the E2F1 transcription factor from RB1, with subsequent transcriptional activation of E2F1-regulated S-phase genes. Interferes with host histone deacetylation mediated by HDAC1 and HDAC2, leading to transcription activation. Also plays a role in the inhibition of both antiviral and antiproliferative functions of host interferon alpha. Interaction with host TMEM173/STING impairs the ability of TMEM173/STING to sense cytosolic DNA and promote the production of type I interferon (IFN-alpha and IFN-beta). The polypeptide is Protein E7 (Homo sapiens (Human)).